A 552-amino-acid polypeptide reads, in one-letter code: Small ribosomal subunit protein bS1 (552 aa).

S1 motif domains follow at residues 31 to 101 (TIKE…ISQQ), 116 to 179 (NAII…ISRK), 200 to 268 (TEPV…LSIK), 285 to 355 (GYAI…VSLK), 372 to 440 (GDIV…LSAK), and 457 to 521 (DSVI…ASVH).

The protein belongs to the bacterial ribosomal protein bS1 family.

Binds mRNA; thus facilitating recognition of the initiation point. It is needed to translate mRNA with a short Shine-Dalgarno (SD) purine-rich sequence. This Helicobacter pylori (strain J99 / ATCC 700824) (Campylobacter pylori J99) protein is Small ribosomal subunit protein bS1 (rpsA).